We begin with the raw amino-acid sequence, 300 residues long: Ribonuclease HIII (300 aa).

Residues 86-300 form the RNase H type-2 domain; the sequence is RPRLGVDESG…FNEICDSASA (215 aa). 3 residues coordinate a divalent metal cation: aspartate 92, glutamate 93, and aspartate 196.

Belongs to the RNase HII family. RnhC subfamily. Mn(2+) serves as cofactor. The cofactor is Mg(2+).

It is found in the cytoplasm. It carries out the reaction Endonucleolytic cleavage to 5'-phosphomonoester.. Functionally, endonuclease that specifically degrades the RNA of RNA-DNA hybrids. The polypeptide is Ribonuclease HIII (Chlamydia felis (strain Fe/C-56) (Chlamydophila felis)).